The following is an 8797-amino-acid chain: Nesprin-1 (8797 aa).

The actin-binding stretch occupies residues methionine 1–serine 289. The Cytoplasmic segment spans residues methionine 1–arginine 8746. Calponin-homology (CH) domains follow at residues isoleucine 27–glutamine 134 and glycine 178–proline 283. Spectrin repeat units follow at residues arginine 314 to phenylalanine 397, aspartate 398 to lysine 502, methionine 503 to glutamate 609, glutamate 610 to alanine 703, aspartate 704 to isoleucine 815, proline 816 to glutamate 923, threonine 924 to isoleucine 1024, aspartate 1025 to aspartate 1122, proline 1123 to glutamate 1246, glutamate 1247 to isoleucine 1335, glutamine 1336 to valine 1444, lysine 1445 to histidine 1550, leucine 1551 to leucine 1653, leucine 1654 to valine 1763, valine 1764 to serine 1879, leucine 1880 to leucine 1976, alanine 1977 to cysteine 2081, cysteine 2082 to serine 2195, leucine 2196 to threonine 2303, alanine 2304 to alanine 2401, serine 2402 to cysteine 2513, alanine 2514 to cysteine 2619, glutamine 2620 to valine 2731, isoleucine 2732 to isoleucine 2838, valine 2839 to valine 2962, alanine 2963 to glutamate 3062, glutamine 3063 to leucine 3171, lysine 3172 to leucine 3275, aspartate 3276 to alanine 3387, leucine 3388 to leucine 3490, valine 3491 to phenylalanine 3593, asparagine 3594 to tryptophan 3720, tyrosine 3721 to glycine 3814, leucine 3815 to lysine 3920, valine 3921 to tyrosine 4028, glutamine 4029 to lysine 4139, serine 4140 to aspartate 4235, leucine 4236 to serine 4339, valine 4340 to alanine 4451, leucine 4452 to asparagine 4560, leucine 4561 to alanine 4669, isoleucine 4670 to threonine 4776, threonine 4777 to arginine 4882, methionine 4883 to isoleucine 4991, tyrosine 4992 to cysteine 5099, threonine 5100 to alanine 5209, valine 5210 to valine 5318, lysine 5319 to lysine 5424, alanine 5425 to leucine 5522, asparagine 5523 to alanine 5630, alanine 5631 to alanine 5736, and valine 5737 to histidine 5842. Residues arginine 314–glutamine 8666 are a coiled coil. Serine 732 carries the post-translational modification Phosphoserine. Phosphothreonine is present on threonine 2270. Serine 5657 is modified (phosphoserine). Positions proline 5859–alanine 5886 are disordered. Spectrin repeat units lie at residues leucine 5962–lysine 6071, leucine 6072–glutamate 6178, arginine 6374–glutamine 6485, isoleucine 6486–leucine 6581, asparagine 6582–tryptophan 6691, serine 6692–lysine 6795, histidine 6796–leucine 6902, histidine 6903–leucine 7020, leucine 7021–valine 7128, leucine 7129–leucine 7237, leucine 7238–glycine 7350, valine 7351–phenylalanine 7454, leucine 7455–isoleucine 7558, aspartate 7559–leucine 7671, leucine 7672–alanine 7783, valine 7784–threonine 7883, leucine 7884–threonine 7997, tryptophan 7998–phenylalanine 8106, and isoleucine 8107–proline 8216. Position 8223 is a phosphoserine (serine 8223). The segment at aspartate 8246–aspartate 8279 is disordered. The span at serine 8247–leucine 8265 shows a compositional bias: low complexity. Position 8274 is a phosphothreonine (threonine 8274). Phosphoserine is present on residues serine 8277, serine 8280, and serine 8305. Spectrin repeat units lie at residues serine 8329 to asparagine 8438, leucine 8439 to alanine 8548, and leucine 8549 to glutamine 8666. Threonine 8360 bears the Phosphothreonine mark. The interval serine 8671–glycine 8734 is disordered. Polar residues-rich tracts occupy residues threonine 8680–glutamine 8696 and serine 8704–serine 8729. The KASH domain maps to arginine 8738–leucine 8797. The helical; Anchor for type IV membrane protein transmembrane segment at alanine 8747 to methionine 8767 threads the bilayer. Residues serine 8768–leucine 8797 lie on the Perinuclear space side of the membrane.

The protein belongs to the nesprin family. Core component of LINC complexes which are composed of inner nuclear membrane SUN domain-containing proteins coupled to outer nuclear membrane KASH domain-containing nesprins. SUN and KASH domain-containing proteins seem to bind each other promiscuously; however, differentially expression of LINC complex constituents can give rise to specific assemblies. At least SUN1/2-containing core LINC complexes are proposed to be hexameric composed of three protomers of each KASH and SUN domain-containing protein. The SUN2:SYNE1/KASH1 LINC complex is a heterohexamer; the homotrimeric cloverleave-like conformation of the SUN domain is a prerequisite for LINC complex formation in which three separate SYNE1/KASH1 peptides bind at the interface of adjacent SUN domains. Self-associates. Interacts with SYNE3. Interacts with SPAG4/SUN4. May interact with MUSK. Interacts with F-actin via its N-terminal domain. Interacts with EMD and LMNA in vitro. Interacts (via KASH domain) with TMEM258. In terms of processing, the disulfid bond with SUN1 or SUN2 is required for stability of the respective LINC complex under tensile forces. Expressed in HeLa, A431, A172 and HaCaT cells (at protein level). Widely expressed. Highly expressed in skeletal and smooth muscles, heart, spleen, peripheral blood leukocytes, pancreas, cerebellum, stomach, kidney and placenta. Isoform GSRP-56 is predominantly expressed in heart and skeletal muscle (at protein level).

The protein localises to the nucleus outer membrane. Its subcellular location is the nucleus. It is found in the nucleus envelope. It localises to the cytoplasm. The protein resides in the cytoskeleton. The protein localises to the myofibril. Its subcellular location is the sarcomere. It is found in the golgi apparatus. Multi-isomeric modular protein which forms a linking network between organelles and the actin cytoskeleton to maintain the subcellular spatial organization. As a component of the LINC (LInker of Nucleoskeleton and Cytoskeleton) complex involved in the connection between the nuclear lamina and the cytoskeleton. The nucleocytoplasmic interactions established by the LINC complex play an important role in the transmission of mechanical forces across the nuclear envelope and in nuclear movement and positioning. May be involved in nucleus-centrosome attachment and nuclear migration in neural progenitors implicating LINC complex association with SUN1/2 and probably association with cytoplasmic dynein-dynactin motor complexes; SYNE1 and SYNE2 may act redundantly. Required for centrosome migration to the apical cell surface during early ciliogenesis. May be involved in nuclear remodeling during sperm head formation in spermatogenesis; a probable SUN3:SYNE1/KASH1 LINC complex may tether spermatid nuclei to posterior cytoskeletal structures such as the manchette. This chain is Nesprin-1, found in Homo sapiens (Human).